The primary structure comprises 178 residues: MKKLLVASLALLILTPVALAEDFSMDAEQLAVVLLKNTISNLEMSNKFVEILDNSGSDSVYQNLWGVIYGALAVMAVNNEVTTALLDEVSKSQELSSKVGDAINSLGENSTVVFGDVNGSKGLTLILRKESEVLQNGSYPYSDNETLSEAYARVVAEFTSRSVDFIVKLFSKIDEAWV.

The N-terminal stretch at 1–20 (MKKLLVASLALLILTPVALA) is a signal peptide.

This is an uncharacterized protein from Archaeoglobus fulgidus (strain ATCC 49558 / DSM 4304 / JCM 9628 / NBRC 100126 / VC-16).